A 567-amino-acid polypeptide reads, in one-letter code: Low-affinity glucose transporter (567 aa).

The span at 1 to 24 (MSNQMTDSTSAGSGTEHSVDTNTA) shows a compositional bias: polar residues. Residues 1–36 (MSNQMTDSTSAGSGTEHSVDTNTALKAGSPNDLKVS) form a disordered region. Residues 18 to 62 (SVDTNTALKAGSPNDLKVSHEEDLNDLEKTAEETLQQKPAKEYIF) lie on the Cytoplasmic side of the membrane. A helical membrane pass occupies residues 63–83 (VSLCCVMVAFGGFVFGWDTGT). Topologically, residues 84–113 (ISGFVNQTDFLRRFGQEKADGSHYLSNVRT) are extracellular. Asn89 carries N-linked (GlcNAc...) asparagine glycosylation. Residues 114–134 (GLIVSIFNIGCAVGGIVLSNI) form a helical membrane-spanning segment. Over 135–141 (GDRWGRR) the chain is Cytoplasmic. A helical transmembrane segment spans residues 142–162 (IGLITVIIIYVIGIIIQIASV). Residues 163–167 (DKWYQ) are Extracellular-facing. A helical membrane pass occupies residues 168 to 188 (YFIGRIISGLGVGGITVLSPM). The Cytoplasmic portion of the chain corresponds to 189–199 (LISETAPKHLR). The helical transmembrane segment at 200-220 (GTLVSCYQLMITFGIFLGYCT) threads the bilayer. Topologically, residues 221-234 (NYGTKNYSNSVQWR) are extracellular. Residues 235 to 255 (VPLGLCFAWAIFMVLGMMFVP) traverse the membrane as a helical segment. Over 256–334 (ESARFLVETD…MGIMIQSLQQ (79 aa)) the chain is Cytoplasmic. A helical membrane pass occupies residues 335–354 (LTGDNYFFYYGTTIFQSVGM). Residues 355–358 (DDSF) are Extracellular-facing. The chain crosses the membrane as a helical span at residues 359–379 (ETSIVLGIVNFASTFFALYTV). The Cytoplasmic portion of the chain corresponds to 380-386 (DHFGRRN). A helical membrane pass occupies residues 387–407 (CLLYGCVGMVACYVVYASVGV). Over 408–429 (TRLWPDGPDHPDISSKGAGNCM) the chain is Extracellular. The helical transmembrane segment at 430 to 450 (IVFACFYIFCFATTWAPIAYV) threads the bilayer. Topologically, residues 451–466 (VISESYPLRVKGKAMA) are cytoplasmic. The helical transmembrane segment at 467 to 487 (IASASNWIWGFLIGFFTPFIT) threads the bilayer. Over 488–493 (SAIHFY) the chain is Extracellular. Residues 494-514 (YGYVFMGCMVFAFFYVYFFVP) traverse the membrane as a helical segment. The Cytoplasmic portion of the chain corresponds to 515-567 (ETKGLTLEEVNEMYSEGVLPWKSSSWVPSSRRGAEYDVDALQHDDKPWYKAML).

This sequence belongs to the major facilitator superfamily. Sugar transporter (TC 2.A.1.1) family.

It is found in the membrane. Its function is as follows. Low-affinity glucose transporter. The sequence is that of Low-affinity glucose transporter (RAG1) from Kluyveromyces lactis (strain ATCC 8585 / CBS 2359 / DSM 70799 / NBRC 1267 / NRRL Y-1140 / WM37) (Yeast).